Here is a 581-residue protein sequence, read N- to C-terminus: Adenine deaminase (581 aa).

This sequence belongs to the metallo-dependent hydrolases superfamily. Adenine deaminase family. The cofactor is Mn(2+).

It catalyses the reaction adenine + H2O + H(+) = hypoxanthine + NH4(+). This is Adenine deaminase from Brucella melitensis biotype 1 (strain ATCC 23456 / CCUG 17765 / NCTC 10094 / 16M).